The primary structure comprises 362 residues: MQPHTQPPQPEASSSRAVHIPSDPAPPRPCLTNDAIVSRWQSSPGFQYFWAWIKRRCDRLKGKEIIRGPFDHSAHGIRSLMNMLDQMTSWVEDATPQPQSNQRFGNLAFRTYNKLLQERLPPLIDSWDIPSNLRSQLLPLFINSHAFGHPTRLDYGTGHELAFVLGLWCCVVPGWVGGDNGTEEEEDELILRVFTRYLELTTFLQKTYNLEPAGSHGVWGLDDYCFLPYLFGSAQLLGSNLTPSASLSLALSHHPSATSPPSAPITDLYTLSLHHLTLFKFGASFSEHSPLLYSLSQMPNWVKPHGGLKKMFLGEVVGKRVVVQGIWVGGWCWGEDVPNVEERGDKNEGKGTDAGTKAPWAR.

Positions 1 to 10 (MQPHTQPPQP) are enriched in pro residues. Disordered stretches follow at residues 1-28 (MQPHTQPPQPEASSSRAVHIPSDPAPPR) and 339-362 (NVEERGDKNEGKGTDAGTKAPWAR). The segment covering 340 to 351 (VEERGDKNEGKG) has biased composition (basic and acidic residues).

The protein belongs to the PTPA-type PPIase family.

The protein resides in the cytoplasm. It is found in the nucleus. The catalysed reaction is [protein]-peptidylproline (omega=180) = [protein]-peptidylproline (omega=0). Functionally, PPIases accelerate the folding of proteins. It catalyzes the cis-trans isomerization of proline imidic peptide bonds in oligopeptides. Acts as a regulatory subunit for PP2A-like phosphatases modulating their activity or substrate specificity, probably by inducing a conformational change in the catalytic subunit, a direct target of the PPIase. Can reactivate inactive phosphatase PP2A-phosphatase methylesterase complexes (PP2Ai) in presence of ATP and Mg(2+) by dissociating the inactive form from the complex. The polypeptide is Serine/threonine-protein phosphatase 2A activator 1 (RRD1) (Cryptococcus neoformans var. neoformans serotype D (strain B-3501A) (Filobasidiella neoformans)).